We begin with the raw amino-acid sequence, 304 residues long: tRNA dimethylallyltransferase (304 aa).

10 to 17 (GPTASGKS) contributes to the ATP binding site. 12-17 (TASGKS) is a binding site for substrate. Residues 35-38 (DSRQ) form an interaction with substrate tRNA region.

It belongs to the IPP transferase family. As to quaternary structure, monomer. Mg(2+) is required as a cofactor.

The enzyme catalyses adenosine(37) in tRNA + dimethylallyl diphosphate = N(6)-dimethylallyladenosine(37) in tRNA + diphosphate. Its function is as follows. Catalyzes the transfer of a dimethylallyl group onto the adenine at position 37 in tRNAs that read codons beginning with uridine, leading to the formation of N6-(dimethylallyl)adenosine (i(6)A). The chain is tRNA dimethylallyltransferase from Gloeothece citriformis (strain PCC 7424) (Cyanothece sp. (strain PCC 7424)).